A 562-amino-acid chain; its full sequence is Laccase-2 (562 aa).

The signal sequence occupies residues 1 to 26 (MASAASSLPLLVSSLLLALFALGAHA). 2 Plastocyanin-like domains span residues 34-150 (DIVM…PAAG) and 160-312 (DEAE…YAGV). N-linked (GlcNAc...) asparagine glycans are attached at residues N39, N53, N72, and N80. 2 residues coordinate Cu cation: H84 and H86. Residue N118 is glycosylated (N-linked (GlcNAc...) asparagine). The Cu cation site is built by H129 and H131. 8 N-linked (GlcNAc...) asparagine glycosylation sites follow: N189, N244, N300, N328, N376, N386, N421, and N445. A Plastocyanin-like 3 domain is found at 411–546 (DFPDRPPARF…KMAFLVEDGS (136 aa)). 7 residues coordinate Cu cation: H463, H466, H468, H525, C526, H527, and H531.

Belongs to the multicopper oxidase family. The cofactor is Cu cation.

Its subcellular location is the secreted. It localises to the extracellular space. It is found in the apoplast. It carries out the reaction 4 hydroquinone + O2 = 4 benzosemiquinone + 2 H2O. Lignin degradation and detoxification of lignin-derived products. The chain is Laccase-2 (LAC2) from Oryza sativa subsp. japonica (Rice).